The sequence spans 210 residues: Coatomer subunit zeta-2 (210 aa).

Basic and acidic residues predominate over residues 1–12 (MQRPEAWPRPHP). A disordered region spans residues 1–34 (MQRPEAWPRPHPGEGAAAAQAGGPAPPARAGEPS). Residues 13–34 (GEGAAAAQAGGPAPPARAGEPS) are compositionally biased toward low complexity.

This sequence belongs to the adaptor complexes small subunit family. In terms of assembly, oligomeric complex.

The protein localises to the cytoplasm. It localises to the endoplasmic reticulum-Golgi intermediate compartment membrane. It is found in the golgi apparatus membrane. Its subcellular location is the cytoplasmic vesicle. The protein resides in the COPI-coated vesicle membrane. Its function is as follows. The coatomer is a cytosolic protein complex that binds to dilysine motifs and reversibly associates with Golgi non-clathrin-coated vesicles, which further mediate biosynthetic protein transport from the ER, via the Golgi up to the trans Golgi network. Coatomer complex is required for budding from Golgi membranes, and is essential for the retrograde Golgi-to-ER transport of dilysine-tagged proteins. The zeta subunit may be involved in regulating the coat assembly and, hence, the rate of biosynthetic protein transport due to its association-dissociation properties with the coatomer complex. In Homo sapiens (Human), this protein is Coatomer subunit zeta-2 (COPZ2).